We begin with the raw amino-acid sequence, 48 residues long: Light-harvesting polypeptide B-885 beta-2 chain (48 aa).

At 1 to 20 the chain is on the cytoplasmic side; the sequence is AEDRKSLSGLTEQEAQEFGT. The chain crosses the membrane as a helical span at residues 21–43; the sequence is LYTQGVAFVAVIAIVAHALVWAW. His-37 lines the a bacteriochlorophyll pocket. Residues 44-48 are Periplasmic-facing; that stretch reads RPWLQ.

The protein belongs to the antenna complex beta subunit family. As to quaternary structure, the core complex is formed by different alpha and beta chains, binding bacteriochlorophyll molecules, and arranged most probably in tetrameric structures disposed around the reaction center. The non-pigmented gamma chains may constitute additional components.

Its subcellular location is the cell inner membrane. Functionally, antenna complexes are light-harvesting systems, which transfer the excitation energy to the reaction centers. The protein is Light-harvesting polypeptide B-885 beta-2 chain of Rhodocyclus tenuis (Rhodospirillum tenue).